The primary structure comprises 173 residues: Translation initiation factor IF-3 (173 aa).

The protein belongs to the IF-3 family. In terms of assembly, monomer.

It is found in the cytoplasm. In terms of biological role, IF-3 binds to the 30S ribosomal subunit and shifts the equilibrium between 70S ribosomes and their 50S and 30S subunits in favor of the free subunits, thus enhancing the availability of 30S subunits on which protein synthesis initiation begins. This is Translation initiation factor IF-3 from Ehrlichia ruminantium (strain Gardel).